Here is a 299-residue protein sequence, read N- to C-terminus: ATP synthase gamma chain (299 aa).

This sequence belongs to the ATPase gamma chain family. In terms of assembly, F-type ATPases have 2 components, CF(1) - the catalytic core - and CF(0) - the membrane proton channel. CF(1) has five subunits: alpha(3), beta(3), gamma(1), delta(1), epsilon(1). CF(0) has three main subunits: a, b and c.

Its subcellular location is the cell membrane. Functionally, produces ATP from ADP in the presence of a proton gradient across the membrane. The gamma chain is believed to be important in regulating ATPase activity and the flow of protons through the CF(0) complex. The chain is ATP synthase gamma chain from Leifsonia xyli subsp. xyli (strain CTCB07).